Consider the following 397-residue polypeptide: Acetylornithine aminotransferase (397 aa).

Phe-129 provides a ligand contact to pyridoxal 5'-phosphate. N(2)-acetyl-L-ornithine is bound at residue Arg-132. Position 214–217 (214–217) interacts with pyridoxal 5'-phosphate; that stretch reads DEVQ. At Lys-243 the chain carries N6-(pyridoxal phosphate)lysine. Residue Ser-271 participates in N(2)-acetyl-L-ornithine binding. Thr-272 is a binding site for pyridoxal 5'-phosphate.

It belongs to the class-III pyridoxal-phosphate-dependent aminotransferase family. ArgD subfamily. In terms of assembly, homodimer. Requires pyridoxal 5'-phosphate as cofactor.

The protein resides in the cytoplasm. It carries out the reaction N(2)-acetyl-L-ornithine + 2-oxoglutarate = N-acetyl-L-glutamate 5-semialdehyde + L-glutamate. It functions in the pathway amino-acid biosynthesis; L-arginine biosynthesis; N(2)-acetyl-L-ornithine from L-glutamate: step 4/4. The protein is Acetylornithine aminotransferase of Neisseria meningitidis serogroup A / serotype 4A (strain DSM 15465 / Z2491).